The primary structure comprises 392 residues: Formate-dependent phosphoribosylglycinamide formyltransferase (392 aa).

Residues 22-23 (EL) and glutamate 82 contribute to the N(1)-(5-phospho-beta-D-ribosyl)glycinamide site. Residues arginine 114, lysine 155, 160-165 (SSGKGQ), 195-198 (EGLV), and glutamate 203 each bind ATP. Positions 119-308 (RLAAETLSLP…EFALHVRAFL (190 aa)) constitute an ATP-grasp domain. The Mg(2+) site is built by glutamate 267 and glutamate 279. N(1)-(5-phospho-beta-D-ribosyl)glycinamide contacts are provided by residues aspartate 286, lysine 355, and 362–363 (RR).

Belongs to the PurK/PurT family. In terms of assembly, homodimer.

It catalyses the reaction N(1)-(5-phospho-beta-D-ribosyl)glycinamide + formate + ATP = N(2)-formyl-N(1)-(5-phospho-beta-D-ribosyl)glycinamide + ADP + phosphate + H(+). The protein operates within purine metabolism; IMP biosynthesis via de novo pathway; N(2)-formyl-N(1)-(5-phospho-D-ribosyl)glycinamide from N(1)-(5-phospho-D-ribosyl)glycinamide (formate route): step 1/1. Involved in the de novo purine biosynthesis. Catalyzes the transfer of formate to 5-phospho-ribosyl-glycinamide (GAR), producing 5-phospho-ribosyl-N-formylglycinamide (FGAR). Formate is provided by PurU via hydrolysis of 10-formyl-tetrahydrofolate. The sequence is that of Formate-dependent phosphoribosylglycinamide formyltransferase from Sodalis glossinidius (strain morsitans).